The sequence spans 415 residues: Probable disease resistance protein At5g66890 (415 aa).

Residues 8–43 (SFDALPHNLRECFLDMASFLEDQRIIASTIIDLWSA) form the NB-ARC domain. LRR repeat units lie at residues 229 to 251 (SLEKLSLWFCHVVDALNELEDVS), 256 to 278 (SLQEIEIDYCYNLDELPYWISQV), 280 to 303 (SLKKLSVTNCNKLCRVIEAIGDLR), 304 to 326 (DLETLRLSSCASLLELPETIDRL), 328 to 351 (NLRFLDVSGGFQLKNLPLEIGKLK), and 352 to 373 (KLEKISMKDCYRCELPDSVKNL). Residues 239–260 (HVVDALNELEDVSETLQSLQEI) adopt a coiled-coil conformation.

The protein belongs to the disease resistance NB-LRR family.

In terms of biological role, possible disease resistance protein. In Arabidopsis thaliana (Mouse-ear cress), this protein is Probable disease resistance protein At5g66890.